The following is a 472-amino-acid chain: Diaminopimelate decarboxylase (472 aa).

The tract at residues 1-23 (MNVHTAGPRHAEKTRHTATPQRV) is disordered. Lys97 carries the N6-(pyridoxal phosphate)lysine modification. Residues Gly283 and 325–328 (EPGR) each bind pyridoxal 5'-phosphate. Substrate-binding residues include Arg328, Arg369, and Tyr373. Cys400 serves as the catalytic Proton donor. The substrate site is built by Glu401 and Tyr430. Tyr430 lines the pyridoxal 5'-phosphate pocket.

This sequence belongs to the Orn/Lys/Arg decarboxylase class-II family. LysA subfamily. Homodimer. The cofactor is pyridoxal 5'-phosphate.

It carries out the reaction meso-2,6-diaminopimelate + H(+) = L-lysine + CO2. Its pathway is amino-acid biosynthesis; L-lysine biosynthesis via DAP pathway; L-lysine from DL-2,6-diaminopimelate: step 1/1. Specifically catalyzes the decarboxylation of meso-diaminopimelate (meso-DAP) to L-lysine. This is Diaminopimelate decarboxylase from Mycobacterium leprae (strain TN).